A 315-amino-acid chain; its full sequence is Putative pyruvate, phosphate dikinase regulatory protein (315 aa).

Positions 1–32 (MGPFGARASPEAGQVVKQPLTDDPQESLAQGE) are disordered. ADP is bound at residue 189–196 (GVSRTSKT).

It belongs to the pyruvate, phosphate/water dikinase regulatory protein family. PDRP subfamily.

It catalyses the reaction N(tele)-phospho-L-histidyl/L-threonyl-[pyruvate, phosphate dikinase] + ADP = N(tele)-phospho-L-histidyl/O-phospho-L-threonyl-[pyruvate, phosphate dikinase] + AMP + H(+). The catalysed reaction is N(tele)-phospho-L-histidyl/O-phospho-L-threonyl-[pyruvate, phosphate dikinase] + phosphate + H(+) = N(tele)-phospho-L-histidyl/L-threonyl-[pyruvate, phosphate dikinase] + diphosphate. Functionally, bifunctional serine/threonine kinase and phosphorylase involved in the regulation of the pyruvate, phosphate dikinase (PPDK) by catalyzing its phosphorylation/dephosphorylation. This chain is Putative pyruvate, phosphate dikinase regulatory protein, found in Caulobacter vibrioides (strain ATCC 19089 / CIP 103742 / CB 15) (Caulobacter crescentus).